The chain runs to 239 residues: Xyloglucan-specific endo-beta-1,4-glucanase A (239 aa).

A signal peptide spans 1-14 (MKLLALSLASLASA). N-linked (GlcNAc...) asparagine glycosylation occurs at Asn-172.

This sequence belongs to the glycosyl hydrolase 12 (cellulase H) family.

The protein resides in the secreted. The catalysed reaction is xyloglucan + H2O = xyloglucan oligosaccharides.. Catalyzes endohydrolysis of 1,4-beta-D-glucosidic linkages in xyloglucan with retention of the beta-configuration of the glycosyl residues. Specific for xyloglucan and does not hydrolyze other cell wall components. Active against tamarind xyloglucan. The polypeptide is Xyloglucan-specific endo-beta-1,4-glucanase A (xgeA) (Emericella nidulans (strain FGSC A4 / ATCC 38163 / CBS 112.46 / NRRL 194 / M139) (Aspergillus nidulans)).